The sequence spans 242 residues: N-alpha-acetyltransferase 60 (242 aa).

Topologically, residues 1 to 192 (MTEVVPSSAL…GGHPPWTILD (192 aa)) are cytoplasmic. The region spanning 13–182 (VSLRLLCHDD…DGFTYVLYIN (170 aa)) is the N-acetyltransferase domain. Position 38 (Y38) interacts with substrate. The residue at position 79 (K79) is an N6-acetyllysine; by autocatalysis. Residue Y97 is part of the active site. Position 99 (L99) interacts with substrate. 101-103 (LGV) contributes to the acetyl-CoA binding site. N6-acetyllysine; by autocatalysis is present on residues K105, K109, and K121. An acetyl-CoA-binding site is contributed by 109–114 (KHGIGS). Residue H138 is part of the active site. Acetyl-CoA contacts are provided by residues N143 and 150–153 (YENR). The segment at 162-173 (PYYYSIRGVLKD) is required for homodimerization. Residue Y165 participates in substrate binding. An intramembrane region (helical) is located at residues 193 to 236 (YIQHLGSALANLSPCSIPHRIYRQAHSLLCSFLPWSSISSKGGI). Topologically, residues 237-242 (EYSRTM) are cytoplasmic.

It belongs to the acetyltransferase family. NAA60 subfamily. Monomer and homodimer; monomer in presence of substrate and homodimer in its absence. Post-translationally, acetylated: autoacetylation is required for optimal acetyltransferase activity.

Its subcellular location is the golgi apparatus membrane. It catalyses the reaction N-terminal L-methionyl-[transmembrane protein] + acetyl-CoA = N-terminal N(alpha)-acetyl-L-methionyl-[transmembrane protein] + CoA + H(+). It carries out the reaction L-lysyl-[protein] + acetyl-CoA = N(6)-acetyl-L-lysyl-[protein] + CoA + H(+). Functionally, N-alpha-acetyltransferase that specifically mediates the acetylation of N-terminal residues of the transmembrane proteins, with a strong preference for N-termini facing the cytosol. Displays N-terminal acetyltransferase activity towards a range of N-terminal sequences including those starting with Met-Lys, Met-Val, Met-Ala and Met-Met. Required for normal chromosomal segregation during anaphase. May also show histone acetyltransferase activity; such results are however unclear in vivo and would require additional experimental evidences. In Rattus norvegicus (Rat), this protein is N-alpha-acetyltransferase 60 (Naa60).